Reading from the N-terminus, the 209-residue chain is Kynurenine formamidase (209 aa).

W18 serves as a coordination point for substrate. H48, H52, and D54 together coordinate Zn(2+). The Proton donor/acceptor role is filled by H58. 2 residues coordinate Zn(2+): H160 and E172.

It belongs to the Cyclase 1 superfamily. KynB family. Homodimer. The cofactor is Zn(2+).

The catalysed reaction is N-formyl-L-kynurenine + H2O = L-kynurenine + formate + H(+). It functions in the pathway amino-acid degradation; L-tryptophan degradation via kynurenine pathway; L-kynurenine from L-tryptophan: step 2/2. Functionally, catalyzes the hydrolysis of N-formyl-L-kynurenine to L-kynurenine, the second step in the kynurenine pathway of tryptophan degradation. The chain is Kynurenine formamidase from Paraburkholderia phymatum (strain DSM 17167 / CIP 108236 / LMG 21445 / STM815) (Burkholderia phymatum).